The following is a 274-amino-acid chain: Protein RecA (274 aa).

43–50 contacts ATP; it reads GPESSGKT.

Belongs to the RecA family.

Its subcellular location is the cytoplasm. Can catalyze the hydrolysis of ATP in the presence of single-stranded DNA, the ATP-dependent uptake of single-stranded DNA by duplex DNA, and the ATP-dependent hybridization of homologous single-stranded DNAs. It interacts with LexA causing its activation and leading to its autocatalytic cleavage. The protein is Protein RecA of Neisseria flavescens.